We begin with the raw amino-acid sequence, 463 residues long: MAQVSINSDYSEWASSTDAGERARLLQSPCVDVVPKSEGEASPGDPDSGTTSTLGAVFIVVNACLGAGLLNFPAAFSTAGGVAAGIALQMGMLVFIISGLVILAYCSQASNERTYQEVVWAVCGKLTGVLCEVAIAVYTFGTCIAFLIIIGDQQDKIIAVMSKEPDGASGSPWYTDRKFTISLTAFLFILPLSIPKEIGFQKYASFLSVVGTWYVTAIIIIKYIWPDKEMRPGDILTRPASWMAVFNAMPTICFGFQCHVSSVPVFNSMRQPEVKTWGGVVTAAMVIALAVYMGTGICGFLTFGAAVDPDVLRSYPSEDVAVAVARAFIILSVLTSYPILHFCGRAVVEGLWLRYKGMPVEEDVGRERRRRVLQTLVWFLLTLLLALFIPDIGKVISVIGGLAACFIFIFPGLCLIQAKLSEMEEVKPASWWALVSYGVLLVTLGAFIFGQTTANAIFVDLLA.

Ser-28 carries the phosphoserine modification. The next 11 helical transmembrane spans lie at 56-76, 82-102, 130-150, 179-199, 206-226, 240-260, 283-303, 320-340, 372-392, 396-416, and 429-449; these read AVFI…PAAF, VAAG…GLVI, LCEV…LIII, FTIS…KEIG, FLSV…YIWP, ASWM…QCHV, AAMV…FLTF, VAVA…YPIL, VLQT…IPDI, ISVI…LCLI, and ASWW…AFIF.

It belongs to the amino acid/polyamine transporter 2 family. In terms of assembly, interacts with the mTORC1 complex; this interaction mediates the recruitment of mTORC1 to the lysosome and its subsequent activation. In terms of tissue distribution, highly expressed in the brain, including the hippocampus, especially in the granular layer of dentate gyrus cells and the pyramidal cell layer of the hippocampus, amygdala, thalamus, hypothalamus, in the layer of Purkinje cells in the cerebellum and the layers of cortex. Particularly strong expression in neurons of the ventromedial hypothalamus, basolateral amygdala, ventral tegmental area, and locus coeruleus. Not detected in glial cells, including astrocytes. In addition to brain, also expressed in the spinal cord (at protein level).

The protein resides in the lysosome membrane. It is found in the cell projection. Its subcellular location is the axon. It carries out the reaction L-glutamine(in) + Na(+)(in) = L-glutamine(out) + Na(+)(out). The enzyme catalyses L-asparagine(in) + Na(+)(in) = L-asparagine(out) + Na(+)(out). Symporter that selectively cotransports sodium ions and amino acids, such as L-glutamine and L-asparagine from the lysosome into the cytoplasm and may participates in mTORC1 activation. The transport activity requires an acidic lysosomal lumen. The polypeptide is Sodium-coupled neutral amino acid transporter 7 (Mus musculus (Mouse)).